A 208-amino-acid polypeptide reads, in one-letter code: uncharacterized protein (208 aa).

Residues 1–16 form the signal peptide; it reads MKFLLIACLAVPAILA. N-linked (GlcNAc...) asparagine glycosylation occurs at asparagine 79.

This is an uncharacterized protein from Caenorhabditis elegans.